Reading from the N-terminus, the 1055-residue chain is Pre-mRNA-splicing factor ATP-dependent RNA helicase-like protein cdc28 (1055 aa).

Positions 67-78 are enriched in basic and acidic residues; it reads PREGSRPKENYN. Residues 67-184 are disordered; it reads PREGSRPKEN…TERLNDLRER (118 aa). Positions 112–121 are enriched in basic residues; it reads PLKKKSRSKT. The segment covering 122 to 132 has biased composition (basic and acidic residues); the sequence is PKREIARRQRD. A compositionally biased stretch (acidic residues) spans 133-145; the sequence is EDEWESDEYEEVV. Over residues 163 to 184 the composition is skewed to basic and acidic residues; sequence QNHDYEKSSDPETERLNDLRER. A Helicase ATP-binding domain is found at 428 to 592; that stretch reads LKAINEYQVL…FDEAPVFYVP (165 aa). 441–448 lines the ATP pocket; that stretch reads AETGSGKT. The DEAH box motif lies at 539–542; that stretch reads DEAH. In terms of domain architecture, Helicase C-terminal spans 617-790; sequence TILQIHTTQP…NIVLLLKSLG (174 aa).

The protein belongs to the DEAD box helicase family. DEAH subfamily. DDX16/PRP8 sub-subfamily.

The protein resides in the nucleus. It catalyses the reaction ATP + H2O = ADP + phosphate + H(+). In terms of biological role, involved in pre-mRNA splicing. Is required together with ATP and at least one other factor, for the first cleavage-ligation reaction. Functions as a molecular motor in the activation of the precatalytic spliceosome for the first transesterification reaction of pre-mRNA splicing by hydrolyzing ATP to cause the activation of the spliceosome without the occurrence of splicing. In Schizosaccharomyces pombe (strain 972 / ATCC 24843) (Fission yeast), this protein is Pre-mRNA-splicing factor ATP-dependent RNA helicase-like protein cdc28 (cdc28).